We begin with the raw amino-acid sequence, 111 residues long: Small ribosomal subunit protein uS17 (111 aa).

The protein belongs to the universal ribosomal protein uS17 family. In terms of assembly, part of the 30S ribosomal subunit.

One of the primary rRNA binding proteins, it binds specifically to the 5'-end of 16S ribosomal RNA. In Archaeoglobus fulgidus (strain ATCC 49558 / DSM 4304 / JCM 9628 / NBRC 100126 / VC-16), this protein is Small ribosomal subunit protein uS17.